Consider the following 143-residue polypeptide: Putative pre-16S rRNA nuclease (143 aa).

Belongs to the YqgF nuclease family.

It is found in the cytoplasm. Functionally, could be a nuclease involved in processing of the 5'-end of pre-16S rRNA. This chain is Putative pre-16S rRNA nuclease, found in Mesomycoplasma hyopneumoniae (strain 232) (Mycoplasma hyopneumoniae).